A 201-amino-acid polypeptide reads, in one-letter code: Ras-related protein Rab-9B (201 aa).

Residues V18, G19, K20, S21, S22, D33, S34, A36, H38, and T39 each contribute to the GTP site. S21 contacts Mg(2+). The short motif at 31 to 42 (KFDSQAFHTIGV) is the Switch 1 element. A Phosphoserine modification is found at S34. Residues T39 and D62 each coordinate Mg(2+). A Switch 2 motif is present at residues 64–78 (AGQERFKSLRTPFYR). Residues G65, N124, K125, A155, and K156 each contribute to the GTP site. Residues C200 and C201 are each lipidated (S-geranylgeranyl cysteine).

Belongs to the small GTPase superfamily. Rab family. Interacts (GTP-bound form) with SGSM1; the GDP-bound form has much lower affinity for SGSM1. The GTP-bound form but not the GDP-bound form interacts with HPS4 and the BLOC-3 complex (heterodimer of HPS1 and HPS4) but does not interact with HPS1 alone. Interacts (GTP-bound form) with NDE1. Requires Mg(2+) as cofactor.

It is found in the cell membrane. It localises to the cytoplasmic vesicle. The protein resides in the phagosome membrane. The enzyme catalyses GTP + H2O = GDP + phosphate + H(+). Its activity is regulated as follows. Regulated by guanine nucleotide exchange factors (GEFs) which promote the exchange of bound GDP for free GTP. Regulated by GTPase activating proteins (GAPs) which increase the GTP hydrolysis activity. Inhibited by GDP dissociation inhibitors (GDIs). In terms of biological role, the small GTPases Rab are key regulators of intracellular membrane trafficking, from the formation of transport vesicles to their fusion with membranes. Rabs cycle between an inactive GDP-bound form and an active GTP-bound form that is able to recruit to membranes different sets of downstream effectors directly responsible for vesicle formation, movement, tethering and fusion. RAB9B is involved in the transport of proteins between the endosomes and the trans Golgi network. May use NDE1/NDEL1 as an effector to interact with the dynein motor complex in order to control retrograde trafficking of RAB9-associated late endosomes to the TGN. The polypeptide is Ras-related protein Rab-9B (RAB9B) (Pongo abelii (Sumatran orangutan)).